A 298-amino-acid chain; its full sequence is 3-deoxy-manno-octulosonate cytidylyltransferase (298 aa).

Residues 22 to 42 (VWVLHGLALGAAAAAAAVAYL) traverse the membrane as a helical segment.

Belongs to the KdsB family. Mg(2+) serves as cofactor. Ubiquitous.

It localises to the membrane. It carries out the reaction 3-deoxy-alpha-D-manno-oct-2-ulosonate + CTP = CMP-3-deoxy-beta-D-manno-octulosonate + diphosphate. The protein operates within nucleotide-sugar biosynthesis; CMP-3-deoxy-D-manno-octulosonate biosynthesis; CMP-3-deoxy-D-manno-octulosonate from 3-deoxy-D-manno-octulosonate and CTP: step 1/1. Catalyzes the production of the sugar nucleotide CMP-3-deoxy-D-manno-octulosonate (CMP-KDO). CTP is the preferred nucleotide donor, and it can partially be replaced with UTP but not with ATP. Activates KDO during the biosynthesis of rhamnogalacturonan II (RG-II), a structurally complex pectic polysaccharide of the primary cell wall. RG-II is essential for the cell wall integrity of rapidly growing tissues and pollen tube growth and elongation. This chain is 3-deoxy-manno-octulosonate cytidylyltransferase, found in Zea mays (Maize).